Consider the following 181-residue polypeptide: Cytolethal distending toxin subunit C (181 aa).

The N-terminal stretch at 1–15 is a signal peptide; sequence MKKLAIVFTMLLIAG. Residue cysteine 16 is the site of N-palmitoyl cysteine attachment. Cysteine 16 is lipidated: S-diacylglycerol cysteine. The 103-residue stretch at 79–181 folds into the Ricin B-type lectin domain; that stretch reads QSGWIMIRTP…NPLNTESPII (103 aa).

As to quaternary structure, heterotrimer of 3 subunits, CdtA, CdtB and CdtC.

The protein resides in the cell outer membrane. In terms of biological role, part of the tripartite complex that is required for the CDT activity. CdtC, along with CdtA, probably forms a heterodimeric subunit required for the delivery of CdtB. In Escherichia coli, this protein is Cytolethal distending toxin subunit C (cdtC).